A 285-amino-acid polypeptide reads, in one-letter code: Diphthine methyl ester synthase (285 aa).

S-adenosyl-L-methionine is bound by residues L9, D84, G87, 112–113 (SI), L163, V221, and H246.

It belongs to the diphthine synthase family.

Its subcellular location is the cytoplasm. The enzyme catalyses 2-[(3S)-amino-3-carboxypropyl]-L-histidyl-[translation elongation factor 2] + 4 S-adenosyl-L-methionine = diphthine methyl ester-[translation elongation factor 2] + 4 S-adenosyl-L-homocysteine + 3 H(+). It participates in protein modification; peptidyl-diphthamide biosynthesis. S-adenosyl-L-methionine-dependent methyltransferase that catalyzes four methylations of the modified target histidine residue in translation elongation factor 2 (EF-2), to form an intermediate called diphthine methyl ester. The four successive methylation reactions represent the second step of diphthamide biosynthesis. The chain is Diphthine methyl ester synthase (dph5) from Aspergillus fumigatus (strain ATCC MYA-4609 / CBS 101355 / FGSC A1100 / Af293) (Neosartorya fumigata).